A 291-amino-acid chain; its full sequence is MFLAPDNAVKQLFRSLSPSWMAKLSLSYERTPIGTVLKKSLHEGPLRVQKALYPEGDDICHTVIIHPPAGIAGGDTLDIQVAVGKGSHVVLSTPSATKWYKSFKNPATQNVQFELGENAKLDWLPQENLFFKGANSNLITKLNLPASASFIGWDALMLGRHASGEEWSSGHIHLLNEIRRDGQLIWIENGHIDAEDPYSKSLPQLGSWPVCATLLALGPQCSNHLAENLSEMMPWTNSIRAGVTLMPQGIVIVRAVSIDIEMARNFMIDVWSKLRPIIHGVPAQPLRLWAS.

Belongs to the UreD family. In terms of assembly, ureD, UreF and UreG form a complex that acts as a GTP-hydrolysis-dependent molecular chaperone, activating the urease apoprotein by helping to assemble the nickel containing metallocenter of UreC. The UreE protein probably delivers the nickel.

The protein resides in the cytoplasm. Required for maturation of urease via the functional incorporation of the urease nickel metallocenter. The polypeptide is Urease accessory protein UreD (Polynucleobacter asymbioticus (strain DSM 18221 / CIP 109841 / QLW-P1DMWA-1) (Polynucleobacter necessarius subsp. asymbioticus)).